We begin with the raw amino-acid sequence, 314 residues long: Leucine-rich repeat-containing protein 52 (314 aa).

The signal sequence occupies residues methionine 1–glycine 23. The LRRNT domain maps to serine 24–leucine 53. At serine 24 to aspartate 244 the chain is on the extracellular side. 2 disulfide bridges follow: cysteine 26/cysteine 32 and cysteine 30/cysteine 39. LRR repeat units follow at residues asparagine 54–leucine 73, aspartate 78–glycine 99, arginine 102–valine 123, asparagine 126–asparagine 148, and serine 151–histidine 172. Asparagine 112, asparagine 131, and asparagine 148 each carry an N-linked (GlcNAc...) asparagine glycan. Residues asparagine 184–threonine 238 form the LRRCT domain. Cystine bridges form between cysteine 188-cysteine 214 and cysteine 190-cysteine 236. 2 N-linked (GlcNAc...) asparagine glycosylation sites follow: asparagine 189 and asparagine 211. The helical transmembrane segment at tyrosine 245 to leucine 265 threads the bilayer. Residues threonine 266–isoleucine 314 lie on the Cytoplasmic side of the membrane.

Interacts with KCNMA1. Interacts with KCNU1; this interaction may be required for LRRC52 stability and changes the channel gating properties. Post-translationally, N-glycosylated. In terms of tissue distribution, testis-specific (at protein level). At the mRNA level, also detected in kidney, ventricle, spinal cord and skeletal muscle, although at lower levels compared to testis. Expression in testis at the protein level requires the presence of KCNU1.

The protein resides in the cell membrane. Auxiliary protein of the large-conductance, voltage and calcium-activated potassium channel (BK alpha). Modulates gating properties by producing a marked shift in the BK channel's voltage dependence of activation in the hyperpolarizing direction, and in the absence of calcium. KCNU1 channel auxiliary protein. Modulates KCNU1 gating properties, shifting KCNU1 gating to more negative potentials at a given pH. This Mus musculus (Mouse) protein is Leucine-rich repeat-containing protein 52 (Lrrc52).